Consider the following 401-residue polypeptide: 8-amino-7-oxononanoate synthase (401 aa).

Arg-19 is a substrate binding site. 106–107 contributes to the pyridoxal 5'-phosphate binding site; sequence GY. His-131 serves as a coordination point for substrate. Residues Ser-176, His-204, and Thr-233 each contribute to the pyridoxal 5'-phosphate site. N6-(pyridoxal phosphate)lysine is present on Lys-236. Thr-350 contributes to the substrate binding site.

Belongs to the class-II pyridoxal-phosphate-dependent aminotransferase family. BioF subfamily. As to quaternary structure, homodimer. Requires pyridoxal 5'-phosphate as cofactor.

The catalysed reaction is 6-carboxyhexanoyl-[ACP] + L-alanine + H(+) = (8S)-8-amino-7-oxononanoate + holo-[ACP] + CO2. It functions in the pathway cofactor biosynthesis; biotin biosynthesis. Catalyzes the decarboxylative condensation of pimeloyl-[acyl-carrier protein] and L-alanine to produce 8-amino-7-oxononanoate (AON), [acyl-carrier protein], and carbon dioxide. This chain is 8-amino-7-oxononanoate synthase, found in Pseudomonas aeruginosa (strain LESB58).